A 690-amino-acid polypeptide reads, in one-letter code: Serotransferrin-1 (690 aa).

Residues 1 to 18 (MKLLLLSALLGCLATAYA) form the signal peptide. 2 Transferrin-like domains span residues 25-329 (VKWC…SLKK) and 340-669 (IKWC…SLRK). Cys28 and Cys50 are disulfide-bonded. Fe(3+)-binding residues include Asp74 and Tyr104. 3 disulfide bridges follow: Cys127/Cys207, Cys172/Cys186, and Cys235/Cys249. The hydrogencarbonate site is built by Thr129, Ser134, Gly136, and Trp137. An N-linked (GlcNAc...) asparagine glycan is attached at Asn169. Tyr201 provides a ligand contact to Fe(3+). His257 is a Fe(3+) binding site. 2 cysteine pairs are disulfide-bonded: Cys343–Cys379 and Cys353–Cys370. The Fe(3+) site is built by Asp394 and Tyr428. 7 cysteine pairs are disulfide-bonded: Cys404/Cys681, Cys419/Cys642, Cys451/Cys529, Cys475/Cys670, Cys485/Cys499, Cys496/Cys512, and Cys569/Cys583. Thr453, Arg457, Ala459, and Gly460 together coordinate hydrogencarbonate. Tyr523 provides a ligand contact to Fe(3+). Residue His591 participates in Fe(3+) binding.

The protein belongs to the transferrin family. As to quaternary structure, monomer. Abundant in liver and serum with smaller amounts found in the stomach and kidney.

It is found in the secreted. Its function is as follows. Transferrins are iron binding transport proteins which can bind two Fe(3+) ions in association with the binding of an anion, usually bicarbonate. It is responsible for the transport of iron from sites of absorption and heme degradation to those of storage and utilization. Serum transferrin may also have a further role in stimulating cell proliferation. The protein is Serotransferrin-1 (tf1) of Salmo salar (Atlantic salmon).